Consider the following 541-residue polypeptide: Glucose-6-phosphate isomerase (541 aa).

Glu-346 acts as the Proton donor in catalysis. Residues His-377 and Lys-506 contribute to the active site.

This sequence belongs to the GPI family.

Its subcellular location is the cytoplasm. The catalysed reaction is alpha-D-glucose 6-phosphate = beta-D-fructose 6-phosphate. The protein operates within carbohydrate biosynthesis; gluconeogenesis. Its pathway is carbohydrate degradation; glycolysis; D-glyceraldehyde 3-phosphate and glycerone phosphate from D-glucose: step 2/4. Catalyzes the reversible isomerization of glucose-6-phosphate to fructose-6-phosphate. The sequence is that of Glucose-6-phosphate isomerase from Rhizobium etli (strain CIAT 652).